A 455-amino-acid chain; its full sequence is UDP-N-acetylmuramate--L-alanine ligase (455 aa).

Residue 109 to 115 (GTHGKTT) participates in ATP binding.

It belongs to the MurCDEF family.

The protein resides in the cytoplasm. It carries out the reaction UDP-N-acetyl-alpha-D-muramate + L-alanine + ATP = UDP-N-acetyl-alpha-D-muramoyl-L-alanine + ADP + phosphate + H(+). It participates in cell wall biogenesis; peptidoglycan biosynthesis. Functionally, cell wall formation. The protein is UDP-N-acetylmuramate--L-alanine ligase of Caldicellulosiruptor saccharolyticus (strain ATCC 43494 / DSM 8903 / Tp8T 6331).